We begin with the raw amino-acid sequence, 293 residues long: Undecaprenyl-diphosphatase (293 aa).

A run of 7 helical transmembrane segments spans residues 3 to 23 (IALA…EFLP), 43 to 63 (KGKI…CWEF), 85 to 105 (INVI…GKAI), 109 to 129 (LFNP…ILWA), 203 to 223 (VATE…TVYE), 238 to 258 (IFAV…RWLL), and 269 to 289 (FAWY…THLI).

Belongs to the UppP family.

Its subcellular location is the cell inner membrane. The catalysed reaction is di-trans,octa-cis-undecaprenyl diphosphate + H2O = di-trans,octa-cis-undecaprenyl phosphate + phosphate + H(+). Functionally, catalyzes the dephosphorylation of undecaprenyl diphosphate (UPP). Confers resistance to bacitracin. The sequence is that of Undecaprenyl-diphosphatase from Ralstonia pickettii (strain 12J).